Reading from the N-terminus, the 403-residue chain is D-galactonate dehydratase family member Mmwyl1_0037 (403 aa).

Substrate contacts are provided by asparagine 37 and histidine 122. Tyrosine 159 functions as the Proton donor/acceptor in the catalytic mechanism. Aspartate 211 is a Mg(2+) binding site. Residue histidine 213 is the Proton donor/acceptor of the active site. Residues glutamate 237 and glutamate 263 each contribute to the Mg(2+) site. Glutamate 263, arginine 284, histidine 313, aspartate 317, and glutamate 340 together coordinate substrate.

Belongs to the mandelate racemase/muconate lactonizing enzyme family. GalD subfamily. Mg(2+) is required as a cofactor.

The catalysed reaction is D-mannonate = 2-dehydro-3-deoxy-D-gluconate + H2O. Functionally, has low D-mannonate dehydratase activity (in vitro), suggesting that this is not a physiological substrate and that it has no significant role in D-mannonate degradation in vivo. Has no detectable activity with a panel of 70 other acid sugars (in vitro). The chain is D-galactonate dehydratase family member Mmwyl1_0037 from Marinomonas sp. (strain MWYL1).